The following is a 285-amino-acid chain: Shikimate dehydrogenase (NADP(+)) (285 aa).

Shikimate contacts are provided by residues 20-22 (SLS) and threonine 67. Catalysis depends on lysine 71, which acts as the Proton acceptor. Glutamate 83 serves as a coordination point for NADP(+). Shikimate-binding residues include asparagine 92 and aspartate 107. NADP(+) contacts are provided by residues 132–136 (GAGGA) and leucine 230. Shikimate is bound at residue tyrosine 232. NADP(+) is bound at residue glycine 253.

This sequence belongs to the shikimate dehydrogenase family. Homodimer.

The catalysed reaction is shikimate + NADP(+) = 3-dehydroshikimate + NADPH + H(+). It functions in the pathway metabolic intermediate biosynthesis; chorismate biosynthesis; chorismate from D-erythrose 4-phosphate and phosphoenolpyruvate: step 4/7. In terms of biological role, involved in the biosynthesis of the chorismate, which leads to the biosynthesis of aromatic amino acids. Catalyzes the reversible NADPH linked reduction of 3-dehydroshikimate (DHSA) to yield shikimate (SA). This is Shikimate dehydrogenase (NADP(+)) from Salinibacter ruber (strain DSM 13855 / M31).